Consider the following 430-residue polypeptide: MTASLKANDGSAELAALMTDLGRRARAAARVLALAPPEQKNRALEAMERAIRAGAAAILDANAEDVADAKGSGANSAFLDRLTLTPARVEAMAEGIAVVRGIADPVGAVTESWQRPNGMTIERVRVPLGVVAVIFESRPNVTADAGVLCLKSGNAVILRGGSESFRSGRAIHACLVQGLREAGLPEAAITLVPTRERAAVGLLLGGLNGTVDVIVPRGGKSLVARVESEARVPVFAHLEGINHVYVDRTADLDMAKSIVLNAKMRRTGVCGAAETLLIDRAAADTHLAPLVGMLIDAGCEVRGDDAVQRADARVKPATDQDWDTEYLDAVIAAKVVDDVDDAITHIHEHGSHHTDAIVAEDAKTAAKFLGEVDSAIVLHNASTQFADGGEFGFGAEIGIATGKFHARGPVGAEQLTTFKYRIHGTGQTRP.

Belongs to the gamma-glutamyl phosphate reductase family.

Its subcellular location is the cytoplasm. It carries out the reaction L-glutamate 5-semialdehyde + phosphate + NADP(+) = L-glutamyl 5-phosphate + NADPH + H(+). The protein operates within amino-acid biosynthesis; L-proline biosynthesis; L-glutamate 5-semialdehyde from L-glutamate: step 2/2. Functionally, catalyzes the NADPH-dependent reduction of L-glutamate 5-phosphate into L-glutamate 5-semialdehyde and phosphate. The product spontaneously undergoes cyclization to form 1-pyrroline-5-carboxylate. This is Gamma-glutamyl phosphate reductase from Rhodopseudomonas palustris (strain BisB5).